A 201-amino-acid chain; its full sequence is 3-isopropylmalate dehydratase small subunit (201 aa).

Belongs to the LeuD family. LeuD type 1 subfamily. In terms of assembly, heterodimer of LeuC and LeuD.

It carries out the reaction (2R,3S)-3-isopropylmalate = (2S)-2-isopropylmalate. It participates in amino-acid biosynthesis; L-leucine biosynthesis; L-leucine from 3-methyl-2-oxobutanoate: step 2/4. In terms of biological role, catalyzes the isomerization between 2-isopropylmalate and 3-isopropylmalate, via the formation of 2-isopropylmaleate. The protein is 3-isopropylmalate dehydratase small subunit of Shewanella halifaxensis (strain HAW-EB4).